A 200-amino-acid chain; its full sequence is Small ribosomal subunit protein uS4 (200 aa).

Residues 22-43 are disordered; it reads TGKELERRPYAPGQHGPTQRKK. The S4 RNA-binding domain maps to 92–170; that stretch reads QRLDNIVYRL…VPEYVTFDAE (79 aa).

This sequence belongs to the universal ribosomal protein uS4 family. Part of the 30S ribosomal subunit. Contacts protein S5. The interaction surface between S4 and S5 is involved in control of translational fidelity.

One of the primary rRNA binding proteins, it binds directly to 16S rRNA where it nucleates assembly of the body of the 30S subunit. Its function is as follows. With S5 and S12 plays an important role in translational accuracy. This chain is Small ribosomal subunit protein uS4, found in Listeria innocua serovar 6a (strain ATCC BAA-680 / CLIP 11262).